We begin with the raw amino-acid sequence, 175 residues long: Interleukin-10 (175 aa).

A signal peptide spans 1–21; the sequence is MQTCCQALLLLLAACTLPAHC. Intrachain disulfides connect cysteine 26-cysteine 123 and cysteine 77-cysteine 129.

Belongs to the IL-10 family. As to quaternary structure, homodimer. Interacts with IL10RA and IL10RB. Expressed predominantly in bursa of Fabricius and cecal tonsils with low levels in thymus, liver and lung.

The protein resides in the secreted. Major immune regulatory cytokine that acts on many cells of the immune system where it has profound anti-inflammatory functions, limiting excessive tissue disruption caused by inflammation. Mechanistically, IL10 binds to its heterotetrameric receptor comprising IL10RA and IL10RB leading to JAK1 and STAT2-mediated phosphorylation of STAT3. In turn, STAT3 translocates to the nucleus where it drives expression of anti-inflammatory mediators. Targets antigen-presenting cells (APCs) such as macrophages and monocytes and inhibits their release of pro-inflammatory cytokines including granulocyte-macrophage colony-stimulating factor /GM-CSF, granulocyte colony-stimulating factor/G-CSF, IL-1 alpha, IL-1 beta, IL-6, IL-8 and TNF-alpha. Also interferes with antigen presentation by reducing the expression of MHC-class II and co-stimulatory molecules, thereby inhibiting their ability to induce T cell activation. In addition, controls the inflammatory response of macrophages by reprogramming essential metabolic pathways including mTOR signaling. The protein is Interleukin-10 of Gallus gallus (Chicken).